The sequence spans 491 residues: Cobyric acid synthase (491 aa).

One can recognise a GATase cobBQ-type domain in the interval 258–445 (ALKVAVPVLG…MHGLFGADAF (188 aa)). Residue cysteine 340 is the Nucleophile of the active site. Residue histidine 437 is part of the active site.

The protein belongs to the CobB/CobQ family. CobQ subfamily.

It functions in the pathway cofactor biosynthesis; adenosylcobalamin biosynthesis. In terms of biological role, catalyzes amidations at positions B, D, E, and G on adenosylcobyrinic A,C-diamide. NH(2) groups are provided by glutamine, and one molecule of ATP is hydrogenolyzed for each amidation. In Mesorhizobium japonicum (strain LMG 29417 / CECT 9101 / MAFF 303099) (Mesorhizobium loti (strain MAFF 303099)), this protein is Cobyric acid synthase.